Reading from the N-terminus, the 354-residue chain is Uroporphyrinogen decarboxylase (354 aa).

Substrate-binding positions include 27 to 31 (RQAGR), Asp77, Tyr154, Thr209, and His327.

Belongs to the uroporphyrinogen decarboxylase family. As to quaternary structure, homodimer.

The protein localises to the cytoplasm. It carries out the reaction uroporphyrinogen III + 4 H(+) = coproporphyrinogen III + 4 CO2. Its pathway is porphyrin-containing compound metabolism; protoporphyrin-IX biosynthesis; coproporphyrinogen-III from 5-aminolevulinate: step 4/4. Functionally, catalyzes the decarboxylation of four acetate groups of uroporphyrinogen-III to yield coproporphyrinogen-III. This Pectobacterium atrosepticum (strain SCRI 1043 / ATCC BAA-672) (Erwinia carotovora subsp. atroseptica) protein is Uroporphyrinogen decarboxylase.